The chain runs to 256 residues: Ubiquinone/menaquinone biosynthesis C-methyltransferase UbiE (256 aa).

S-adenosyl-L-methionine-binding positions include Thr-79, Asp-100, and 128–129; that span reads DA.

The protein belongs to the class I-like SAM-binding methyltransferase superfamily. MenG/UbiE family.

The catalysed reaction is a 2-demethylmenaquinol + S-adenosyl-L-methionine = a menaquinol + S-adenosyl-L-homocysteine + H(+). It catalyses the reaction a 2-methoxy-6-(all-trans-polyprenyl)benzene-1,4-diol + S-adenosyl-L-methionine = a 5-methoxy-2-methyl-3-(all-trans-polyprenyl)benzene-1,4-diol + S-adenosyl-L-homocysteine + H(+). It participates in quinol/quinone metabolism; menaquinone biosynthesis; menaquinol from 1,4-dihydroxy-2-naphthoate: step 2/2. It functions in the pathway cofactor biosynthesis; ubiquinone biosynthesis. In terms of biological role, methyltransferase required for the conversion of demethylmenaquinol (DMKH2) to menaquinol (MKH2) and the conversion of 2-polyprenyl-6-methoxy-1,4-benzoquinol (DDMQH2) to 2-polyprenyl-3-methyl-6-methoxy-1,4-benzoquinol (DMQH2). The polypeptide is Ubiquinone/menaquinone biosynthesis C-methyltransferase UbiE (Pseudomonas syringae pv. tomato (strain ATCC BAA-871 / DC3000)).